We begin with the raw amino-acid sequence, 200 residues long: FSQKYIELVVVADHGMFTKYNGNLNTIRTRVHEIVNTLNGFYRSLNILISLTDLEIWSNQDLINVQSAANDTLKTFGEWRERVLLNRISHDNAQLLTAIDLADNTIGIAYTGGMCYPKNSVGIVQDHSPKTLLIAVTMAHELGHNLGMKHDENHCHCSASFCIMPPSISEGPSYEFSDCSKDYYQMFLTKRKPQCILNKP.

The region spanning 4 to 200 (KYIELVVVAD…RKPQCILNKP (197 aa)) is the Peptidase M12B domain. Ca(2+) is bound at residue Glu7. N-linked (GlcNAc...) asparagine glycosylation is present at Asn70. Asp91 is a Ca(2+) binding site. 3 disulfides stabilise this stretch: Cys115–Cys195, Cys155–Cys179, and Cys157–Cys162. His140 contacts Zn(2+). Glu141 is an active-site residue. 2 residues coordinate Zn(2+): His144 and His150. Ca(2+) contacts are provided by Cys195 and Asn198.

Belongs to the venom metalloproteinase (M12B) family. P-I subfamily. As to quaternary structure, monomer. Zn(2+) serves as cofactor. In terms of tissue distribution, expressed by the venom gland.

Its subcellular location is the secreted. Its function is as follows. Snake venom zinc metalloproteinase that induces weak hemorrhage and mild myonecrosis. Shows mild myotoxicity by killing myocytes. Also induces edema in the mouse footpad at doses where hemorrhage is absent. In vitro, degrades laminin, fibronectin, and type IV collagen, suggesting this toxin play a role in local tissue damage by degrading extracellular matrix, and possibly by degrading muscle extracellular matrix. Hemorrhage is not due to cytotoxicity towards endothelial cells in culture, and may only play a minor role in local bleeding characteristic of L.muta envenomations. Also induces the synthesis of several endogenous matrix metalloproteinases, which in turn, may participate in extracellular matrix degradation. In Lachesis muta muta (Bushmaster), this protein is Snake venom metalloproteinase hemorrhagic factor 2.